The sequence spans 354 residues: Caffeic acid 3-O-methyltransferase (354 aa).

Residue 121–127 (MNQDKVL) coordinates substrate. Residues 153–171 (AFEYHGKDQRFNKVFNSGM) are substrate binding. The S-adenosyl-L-methionine site is built by Gly199, Asp222, Asp242, Met243, and Lys256. Catalysis depends on His260, which acts as the Proton acceptor.

The protein belongs to the class I-like SAM-binding methyltransferase superfamily. Cation-independent O-methyltransferase family. COMT subfamily. As to quaternary structure, homodimer.

The catalysed reaction is (E)-caffeate + S-adenosyl-L-methionine = (E)-ferulate + S-adenosyl-L-homocysteine + H(+). It participates in aromatic compound metabolism; phenylpropanoid biosynthesis. Functionally, catalyzes the conversion of caffeic acid to ferulic acid and of 5-hydroxyferulic acid to sinapic acid. The resulting products may subsequently be converted to the corresponding alcohols that are incorporated into lignins. This Zinnia elegans (Garden zinnia) protein is Caffeic acid 3-O-methyltransferase.